Consider the following 432-residue polypeptide: Major royal jelly protein 1 (432 aa).

The signal sequence occupies residues 1 to 19; it reads MTRLFMLVCLGIVCQGTTG. N-linked (GlcNAc...) asparagine glycans are attached at residues Asn-28, Asn-144, and Asn-177. Cystine bridges form between Cys-118–Cys-150, Cys-132–Cys-195, and Cys-329–Cys-416. Pro-364 provides a ligand contact to 24-methylenecholesterol. At His-431 the chain carries Histidine amide; atypical. Position 432 is a leucine amide; atypical (Leu-432).

This sequence belongs to the major royal jelly protein family. In terms of assembly, is present in royal jelly in different forms: monomer (55 kDa), oligomeric subunit (ca. 287-420 kDa), and water-insoluble aggregates in sediment after interaction with fatty acids. Component of the apisin heterooligomer complex consisting of 4 copies of MRJP1 and 4 copies of apisimin, associated with 8 molecules of 24-methylenecholesterol; apisimin forms a bridge connecting two MRJP1 dimers. At low pH multiple apisin octamers stack to form filaments that increase the viscosity of royal jelly; these filaments may be stabilized by bound fatty acid chains. The mandibular gland, where royal jelly is produced, has low pH conditions favouring filament formation, while the higher pH of the insect midgut favors filament disassembly. Post-translationally, N-glycosylated on Asn-28, Asn-144 and Asn-177. Glycosylation is required to prevent apisin multimers from aggregating. In terms of processing, jellein-2 is probably processed to yield jellein-1 and jellein-4. In terms of tissue distribution, found in and secreted from the hypopharyngeal glands of the worker honey bee (at protein level); expression peaks at 12 days post eclosion. Expressed in the brains of worker bees (at protein level); found in antennal lobe, optical lobe and a subpopulation of Kenyon cells in the mushroom body. Found in the ommatidia of worker bees (at protein level). Expressed in the spermatheca of adult queen bees (at protein level); expression levels are higher in mated queens than in virgin queens. Expressed in queen bee ovaries and male drone testes.

Its subcellular location is the secreted. The protein resides in the cytoplasm. It is found in the cell projection. The protein localises to the rhabdomere. It localises to the cytoskeleton. Most abundant protein component of royal jelly, a substance produced in the hypopharyngeal gland containing proteins, free amino acids, fatty acids, sugars and other nutrients, which is fed to developing larvae by worker nurse bees. Major royal jelly proteins (Mrjps) are high in essential amino acids and probably have a nutritional function in larval food. All larvae are fed some royal jelly (also known as worker jelly) early in their development but it forms the principal source of nutrition for larvae destined to become queen bees. Induces the differentiation of honey bee larvae into queens through an Egfr-mediated signaling pathway. Promotes body size increase by activating p70 S6 kinase, stimulates ovary development by augmenting the titer of vitellogenin (Vg) and juvenile hormone, and reduces developmental time by increasing the activity of mitogen-activated protein kinase and inducing 20-hydroxyecdysone (ecdysterone, 20E) production. Together with apisimin forms the apisin complex that polymerizes at low pH, forming a fiber network and increasing the viscosity of royal jelly. The viscous royal Jelly placed in honeycomb cells containing larvae destined to become queens acts as both a food supply and an adhesive preventing larvae from falling out; queens are reared in special large cells oriented vertically. Produced in the spermatheca of adult queen bees, along with other major royal jelly proteins, where it may act as a nutrient supply for sperm stored by mated queens, or be involved in energy metabolism. In terms of biological role, has antibacterial activity against the Gram-positive bacteria S.aureus ATCC 6535, S.saprophyticus and B.subtilis CCT2471, and the Gram-negative bacteria E.coli CCT1371, E.cloacae ATCC 23355, K.pneumoniae ATCC 13883 and P.aeruginosa ATCC 27853, and antifungal activity against C.albicans. Lack cytolytic activity and does not induce rat peritoneal mast cell degranulation. Its function is as follows. Lacks antibacterial and antifungal activity. Lacks cytolytic activity and does not induce rat peritoneal mast cell degranulation. The sequence is that of Major royal jelly protein 1 from Apis mellifera (Honeybee).